The sequence spans 507 residues: Maturase K (507 aa).

It belongs to the intron maturase 2 family. MatK subfamily.

It localises to the plastid. It is found in the chloroplast. Usually encoded in the trnK tRNA gene intron. Probably assists in splicing its own and other chloroplast group II introns. This Craterostigma plantagineum (Blue gem) protein is Maturase K.